The primary structure comprises 613 residues: RUN domain-containing protein 1 (613 aa).

Residues 15-36 (AAVGPKAKDEEEEEEEPLPPCE) are disordered. Residue Thr54 is modified to Phosphothreonine. Positions 57-69 (LEEATAEEPGAAP) are enriched in low complexity. Disordered stretches follow at residues 57–79 (LEEA…PGRT), 140–177 (YEGP…RLET), and 305–330 (GKTG…KAED). Residues Ser71 and Ser75 each carry the phosphoserine modification. Residues 159-177 (PWLRGEDQSEQEKQERLET) show a composition bias toward basic and acidic residues. A coiled-coil region spans residues 160–235 (WLRGEDQSEQ…IKKLDMNLNE (76 aa)). Positions 309–325 (NGCSRTGSSRTPPGNSK) are enriched in polar residues. Positions 421 to 602 (ELTMAVRKEL…LKFSLPVDLA (182 aa)) constitute an RUN domain. Position 497 is a phosphoserine (Ser497).

In terms of biological role, may play a role as p53/TP53 inhibitor and thus may have oncogenic activity. This chain is RUN domain-containing protein 1 (RUNDC1), found in Homo sapiens (Human).